A 200-amino-acid polypeptide reads, in one-letter code: Coiled-coil domain-containing protein 28B (200 aa).

M1 carries the post-translational modification N-acetylmethionine. The segment covering 1–10 has biased composition (basic residues); the sequence is MDDKKKKRSP. The disordered stretch occupies residues 1–49; sequence MDDKKKKRSPKPCLAQPAQAPGTLRRVPVPTSHSGSLALGLPHLPSPKQ. S46 and S115 each carry phosphoserine. The span at 141–152 shows a compositional bias: acidic residues; sequence EEEDDEEEEDGV. The tract at residues 141–164 is disordered; the sequence is EEEDDEEEEDGVTEGLPEEQKKTM. Positions 158 to 183 form a coiled coil; the sequence is EEQKKTMADRNLDQLLSNLEDLSNSI.

Interacts with BBS1, BBS2, BBS4, BBS5, BBS6, BBS7 and TTC8/BBS8. Interacts with MAPKAP1/SIN1 isoform 1 and RICTOR.

It localises to the cytoplasm. The protein resides in the cytoskeleton. It is found in the microtubule organizing center. Its subcellular location is the centrosome. Functionally, involved in ciliogenesis. Regulates cilia length through its interaction with MAPKAP1/SIN1 but independently of mTORC2 complex. Modulates mTORC2 complex assembly and function, possibly enhances AKT1 phosphorylation. Does not seem to modulate assembly and function of mTORC1 complex. The polypeptide is Coiled-coil domain-containing protein 28B (CCDC28B) (Homo sapiens (Human)).